Reading from the N-terminus, the 747-residue chain is Threonine synthase-like 1 (747 aa).

Lysine 351 bears the N6-(pyridoxal phosphate)lysine mark.

Belongs to the threonine synthase family. The cofactor is pyridoxal 5'-phosphate.

This chain is Threonine synthase-like 1 (Thnsl1), found in Mus musculus (Mouse).